Here is a 177-residue protein sequence, read N- to C-terminus: Biotin-dependent acetyl-/propionyl-coenzyme A carboxylase epsilon subunit (177 aa).

Positions 1 to 112 (MGTCPCESSE…TEKPLHPHEP (112 aa)) are disordered. The segment covering 18–100 (VSGTNEVSDG…SDGNETNNPA (83 aa)) has biased composition (polar residues).

Interacts with the AccA3/AccD5 biotin-dependent acyl-CoA carboxylase complex. Interacts with the AccA3/AccD6 complex. Is also part of the long-chain acyl-CoA carboxylase (LCC) complex, which is composed of AccA3, AccD4, AccD5 and AccE5. The four subunits are essential for activity, but AccD5, together with AccE5, probably plays a structural role rather than a catalytic one.

Its function is as follows. Stimulates activity of the AccA3/AccD5 biotin-dependent acyl-CoA carboxylase complex. Interacts with AccD5 and modulates its carboxylase activity for acetyl-CoA and propionyl-CoA. Inhibits activity of the AccA3/AccD6 complex. Is also required for the activity of the long-chain acyl-CoA carboxylase (LCC) complex. This is Biotin-dependent acetyl-/propionyl-coenzyme A carboxylase epsilon subunit from Mycobacterium tuberculosis (strain ATCC 25618 / H37Rv).